Here is a 302-residue protein sequence, read N- to C-terminus: Short-chain dehydrogenase/reductase 3 (302 aa).

The next 4 helical transmembrane spans lie at 9 to 29 (LVMF…GLVL), 170 to 190 (IVCL…DYCT), 195 to 215 (AFAF…VSAT), and 253 to 273 (AVQL…LVIL). Position 175 (Ser175) interacts with substrate. Tyr188 serves as the catalytic Proton acceptor.

Belongs to the short-chain dehydrogenases/reductases (SDR) family. Widely expressed with highest levels found in heart, placenta, lung, liver, kidney, pancreas, thyroid, testis, stomach, trachea and spinal cord. Lower levels found in skeletal muscle, intestine and lymph node. No expression detected in brain. In the retina, expressed in cone but not rod outer segments.

Its subcellular location is the membrane. The catalysed reaction is all-trans-retinol + NADP(+) = all-trans-retinal + NADPH + H(+). Its function is as follows. Catalyzes the reduction of all-trans-retinal to all-trans-retinol in the presence of NADPH. This chain is Short-chain dehydrogenase/reductase 3 (DHRS3), found in Homo sapiens (Human).